The sequence spans 77 residues: Putative membrane protein insertion efficiency factor (77 aa).

Belongs to the UPF0161 family.

The protein localises to the cell membrane. Its function is as follows. Could be involved in insertion of integral membrane proteins into the membrane. The chain is Putative membrane protein insertion efficiency factor from Geobacillus sp. (strain WCH70).